A 229-amino-acid chain; its full sequence is ATP synthase subunit a (229 aa).

6 helical membrane-spanning segments follow: residues 16-36 (YAHVATLGIATVAAVGIGAAA), 81-101 (YIPFFASVFFFILFNNLLGMI), 110-130 (NMNTTFGFGVLMFLFYNFQGV), 142-162 (FMGPVIFLAPLMFVIEIVSHI), 175-195 (VMMGDHTVLSVFLDLVPIGVP), and 196-216 (IPFYVMGLFVCFVQAFVFTLL).

The protein belongs to the ATPase A chain family. In terms of assembly, F-type ATPases have 2 components, CF(1) - the catalytic core - and CF(0) - the membrane proton channel. CF(1) has five subunits: alpha(3), beta(3), gamma(1), delta(1), epsilon(1). CF(0) has three main subunits: a(1), b(2) and c(9-12). The alpha and beta chains form an alternating ring which encloses part of the gamma chain. CF(1) is attached to CF(0) by a central stalk formed by the gamma and epsilon chains, while a peripheral stalk is formed by the delta and b chains.

It localises to the cell inner membrane. Key component of the proton channel; it plays a direct role in the translocation of protons across the membrane. The protein is ATP synthase subunit a of Bdellovibrio bacteriovorus (strain ATCC 15356 / DSM 50701 / NCIMB 9529 / HD100).